The chain runs to 243 residues: Probable transcriptional regulatory protein BDU_30 (243 aa).

The protein belongs to the TACO1 family.

It is found in the cytoplasm. The chain is Probable transcriptional regulatory protein BDU_30 from Borrelia duttonii (strain Ly).